A 400-amino-acid polypeptide reads, in one-letter code: Phosphoglycerate kinase (400 aa).

Substrate-binding positions include 21–23 (DFN), R36, 59–62 (HLGR), R118, and R151. ATP-binding positions include K201, G293, E324, and 353-356 (GGDS).

It belongs to the phosphoglycerate kinase family. As to quaternary structure, monomer.

It is found in the cytoplasm. The catalysed reaction is (2R)-3-phosphoglycerate + ATP = (2R)-3-phospho-glyceroyl phosphate + ADP. The protein operates within carbohydrate degradation; glycolysis; pyruvate from D-glyceraldehyde 3-phosphate: step 2/5. The polypeptide is Phosphoglycerate kinase (Fervidobacterium nodosum (strain ATCC 35602 / DSM 5306 / Rt17-B1)).